A 264-amino-acid chain; its full sequence is Thymidylate synthase (264 aa).

Arg21 contacts dUMP. Position 51 (His51) interacts with (6R)-5,10-methylene-5,6,7,8-tetrahydrofolate. Position 126–127 (126–127 (RR)) interacts with dUMP. Cys146 (nucleophile) is an active-site residue. DUMP is bound by residues 166-169 (RSAD), Asn177, and 207-209 (HLY). Asp169 contacts (6R)-5,10-methylene-5,6,7,8-tetrahydrofolate. Ala263 contacts (6R)-5,10-methylene-5,6,7,8-tetrahydrofolate.

This sequence belongs to the thymidylate synthase family. Bacterial-type ThyA subfamily. Homodimer.

It localises to the cytoplasm. The enzyme catalyses dUMP + (6R)-5,10-methylene-5,6,7,8-tetrahydrofolate = 7,8-dihydrofolate + dTMP. The protein operates within pyrimidine metabolism; dTTP biosynthesis. In terms of biological role, catalyzes the reductive methylation of 2'-deoxyuridine-5'-monophosphate (dUMP) to 2'-deoxythymidine-5'-monophosphate (dTMP) while utilizing 5,10-methylenetetrahydrofolate (mTHF) as the methyl donor and reductant in the reaction, yielding dihydrofolate (DHF) as a by-product. This enzymatic reaction provides an intracellular de novo source of dTMP, an essential precursor for DNA biosynthesis. The protein is Thymidylate synthase of Bartonella tribocorum (strain CIP 105476 / IBS 506).